The chain runs to 78 residues: Large ribosomal subunit protein uL24 (78 aa).

Positions 52-78 (PSEKTPNGGHVNKEMPIDISNVAKVEG) are disordered.

Belongs to the universal ribosomal protein uL24 family. As to quaternary structure, part of the 50S ribosomal subunit.

One of two assembly initiator proteins, it binds directly to the 5'-end of the 23S rRNA, where it nucleates assembly of the 50S subunit. In terms of biological role, one of the proteins that surrounds the polypeptide exit tunnel on the outside of the subunit. The polypeptide is Large ribosomal subunit protein uL24 (Campylobacter concisus (strain 13826)).